The chain runs to 167 residues: MGIEQKAGDMGIVTASLEQLVNWSRSSAMWPLLFGLACCAIEMMGAQGANYDLSRFGMEINRASPRQADLMIVAGRVSRKMAPVVRRLYDQMADPKWVIAMGDCAACGGVFNNYAIVQGVDEIVPVDVYVAGCPPRPEALIDGIIHLHEKVKRMRLDGELREPVRLS.

4 residues coordinate [4Fe-4S] cluster: Cys-38, Cys-39, Cys-104, and Cys-133.

This sequence belongs to the complex I 20 kDa subunit family. NDH-1 is composed of 14 different subunits. Subunits NuoB, C, D, E, F, and G constitute the peripheral sector of the complex. [4Fe-4S] cluster serves as cofactor.

The protein localises to the cell membrane. The enzyme catalyses a quinone + NADH + 5 H(+)(in) = a quinol + NAD(+) + 4 H(+)(out). Its function is as follows. NDH-1 shuttles electrons from NADH, via FMN and iron-sulfur (Fe-S) centers, to quinones in the respiratory chain. The immediate electron acceptor for the enzyme in this species is believed to be ubiquinone. Couples the redox reaction to proton translocation (for every two electrons transferred, four hydrogen ions are translocated across the cytoplasmic membrane), and thus conserves the redox energy in a proton gradient. The polypeptide is NADH-quinone oxidoreductase subunit B 2 (Roseiflexus sp. (strain RS-1)).